The following is a 196-amino-acid chain: Phosphoheptose isomerase (196 aa).

The 159-residue stretch at 38 to 196 (LIAGYRAGAR…VEHALFAPRQ (159 aa)) folds into the SIS domain. 53 to 55 (NGG) is a binding site for substrate. 2 residues coordinate Zn(2+): His-62 and Glu-66. Substrate is bound by residues Glu-66, 95–96 (ND), 121–123 (STS), Ser-126, and Gln-173. Zn(2+) contacts are provided by Gln-173 and His-181.

It belongs to the SIS family. GmhA subfamily. It depends on Zn(2+) as a cofactor.

It is found in the cytoplasm. The enzyme catalyses 2 D-sedoheptulose 7-phosphate = D-glycero-alpha-D-manno-heptose 7-phosphate + D-glycero-beta-D-manno-heptose 7-phosphate. The protein operates within carbohydrate biosynthesis; D-glycero-D-manno-heptose 7-phosphate biosynthesis; D-glycero-alpha-D-manno-heptose 7-phosphate and D-glycero-beta-D-manno-heptose 7-phosphate from sedoheptulose 7-phosphate: step 1/1. Functionally, catalyzes the isomerization of sedoheptulose 7-phosphate in D-glycero-D-manno-heptose 7-phosphate. This Mycobacterium bovis (strain ATCC BAA-935 / AF2122/97) protein is Phosphoheptose isomerase.